The sequence spans 575 residues: Alpha-(1,6)-fucosyltransferase (575 aa).

At 1–9 (MRPWTGSWR) the chain is on the cytoplasmic side. Residues 10–30 (WIMLILFAWGTLLFYIGGHLV) traverse the membrane as a helical; Signal-anchor for type II membrane protein segment. The Lumenal segment spans residues 31-575 (RDNDHPDHSS…KYPTYPEAEK (545 aa)). 3 disulfides stabilise this stretch: cysteine 204/cysteine 266, cysteine 212/cysteine 230, and cysteine 218/cysteine 222. The region spanning 206 to 493 (KAKKLVCNIN…PDASANFHSL (288 aa)) is the GT23 domain. Position 278 is a phosphoserine (serine 278). Positions 299–305 (PRPPYLP) match the SH3-binding motif. Residues 365-366 (RR) form an important for donor substrate binding region. Cysteine 465 and cysteine 472 are joined by a disulfide. Residues 502-563 (QNAHNQIAIY…PSYKVREKIE (62 aa)) form the SH3 domain.

It belongs to the glycosyltransferase 23 family. In terms of processing, tyrosine phosphorylated by PKDCC/VLK.

It localises to the golgi apparatus. The protein resides in the golgi stack membrane. It catalyses the reaction N(4)-{beta-D-GlcNAc-(1-&gt;2)-alpha-D-Man-(1-&gt;3)-[beta-D-GlcNAc-(1-&gt;2)-alpha-D-Man-(1-&gt;6)]-beta-D-Man-(1-&gt;4)-beta-D-GlcNAc-(1-&gt;4)-beta-D-GlcNAc}-L-asparaginyl-[protein] + GDP-beta-L-fucose = an N(4)-{beta-D-GlcNAc-(1-&gt;2)-alpha-D-Man-(1-&gt;3)-[beta-D-GlcNAc-(1-&gt;2)-alpha-D-Man-(1-&gt;6)]-beta-D-Man-(1-&gt;4)-beta-D-GlcNAc-(1-&gt;4)-[alpha-L-Fuc-(1-&gt;6)]-beta-D-GlcNAc}-L-asparaginyl-[protein] + GDP + H(+). Its pathway is protein modification; protein glycosylation. In terms of biological role, catalyzes the addition of fucose in alpha 1-6 linkage to the first GlcNAc residue, next to the peptide chains in N-glycans. This is Alpha-(1,6)-fucosyltransferase (FUT8) from Homo sapiens (Human).